The following is a 213-amino-acid chain: Chloramphenicol acetyltransferase 3 (213 aa).

Catalysis depends on His-189, which acts as the Proton acceptor.

This sequence belongs to the chloramphenicol acetyltransferase family. As to quaternary structure, homotrimer.

The catalysed reaction is chloramphenicol + acetyl-CoA = chloramphenicol 3-acetate + CoA. In terms of biological role, this enzyme is an effector of chloramphenicol resistance in bacteria. The polypeptide is Chloramphenicol acetyltransferase 3 (cat3) (Escherichia coli).